Reading from the N-terminus, the 675-residue chain is Putative exonuclease GOR (675 aa).

A compositionally biased stretch (basic and acidic residues) spans 66–79 (VAKEAAPEASRHLG). 2 disordered regions span residues 66–90 (VAKE…APEG) and 225–263 (AKRT…TATT). The tract at residues 358-483 (MPGLSRAALY…VRDGRKESLD (126 aa)) is GOR1-125 epitope.

The protein belongs to the REXO1/REXO3 family.

The protein localises to the cytoplasm. It is found in the nucleus. In Homo sapiens (Human), this protein is Putative exonuclease GOR (REXO1L1P).